The sequence spans 222 residues: Large ribosomal subunit protein uL1 (222 aa).

The protein belongs to the universal ribosomal protein uL1 family. As to quaternary structure, part of the 50S ribosomal subunit.

Its function is as follows. Binds directly to 23S rRNA. Probably involved in E site tRNA release. In terms of biological role, protein L1 is also a translational repressor protein, it controls the translation of its operon by binding to its mRNA. The sequence is that of Large ribosomal subunit protein uL1 from Pyrobaculum neutrophilum (strain DSM 2338 / JCM 9278 / NBRC 100436 / V24Sta) (Thermoproteus neutrophilus).